A 465-amino-acid chain; its full sequence is Cysteine--tRNA ligase (465 aa).

Cys30 is a Zn(2+) binding site. A 'HIGH' region motif is present at residues Ile32 to His42. Cys214, His239, and Glu243 together coordinate Zn(2+). The 'KMSKS' region motif lies at Lys271–Ser275. Lys274 is an ATP binding site.

The protein belongs to the class-I aminoacyl-tRNA synthetase family. Monomer. Zn(2+) is required as a cofactor.

It is found in the cytoplasm. It carries out the reaction tRNA(Cys) + L-cysteine + ATP = L-cysteinyl-tRNA(Cys) + AMP + diphosphate. This Burkholderia thailandensis (strain ATCC 700388 / DSM 13276 / CCUG 48851 / CIP 106301 / E264) protein is Cysteine--tRNA ligase.